Consider the following 398-residue polypeptide: tRNA pseudouridine synthase D (398 aa).

Catalysis depends on Asp-76, which acts as the Nucleophile. One can recognise a TRUD domain in the interval 151 to 361 (GVPNRFGVQR…MEGERRPLRV (211 aa)).

This sequence belongs to the pseudouridine synthase TruD family.

The catalysed reaction is uridine(13) in tRNA = pseudouridine(13) in tRNA. Responsible for synthesis of pseudouridine from uracil-13 in transfer RNAs. The polypeptide is tRNA pseudouridine synthase D (Geobacter sp. (strain M21)).